A 396-amino-acid polypeptide reads, in one-letter code: Tryptophan synthase beta chain (396 aa).

K86 carries the post-translational modification N6-(pyridoxal phosphate)lysine.

This sequence belongs to the TrpB family. Tetramer of two alpha and two beta chains. The cofactor is pyridoxal 5'-phosphate.

It catalyses the reaction (1S,2R)-1-C-(indol-3-yl)glycerol 3-phosphate + L-serine = D-glyceraldehyde 3-phosphate + L-tryptophan + H2O. The protein operates within amino-acid biosynthesis; L-tryptophan biosynthesis; L-tryptophan from chorismate: step 5/5. Functionally, the beta subunit is responsible for the synthesis of L-tryptophan from indole and L-serine. The sequence is that of Tryptophan synthase beta chain from Vibrio atlanticus (strain LGP32) (Vibrio splendidus (strain Mel32)).